A 438-amino-acid chain; its full sequence is Cysteine--tRNA ligase (438 aa).

Cysteine 28 contacts Zn(2+). Residues 30–40 carry the 'HIGH' region motif; that stretch reads PTVYNHLHLGN. Zn(2+)-binding residues include cysteine 207, histidine 232, and glutamate 236. The short motif at 264 to 268 is the 'KMSKS' region element; the sequence is KMSKS. Residue lysine 267 participates in ATP binding.

Belongs to the class-I aminoacyl-tRNA synthetase family. In terms of assembly, monomer. Zn(2+) is required as a cofactor.

The protein localises to the cytoplasm. It carries out the reaction tRNA(Cys) + L-cysteine + ATP = L-cysteinyl-tRNA(Cys) + AMP + diphosphate. In Onion yellows phytoplasma (strain OY-M), this protein is Cysteine--tRNA ligase.